Consider the following 93-residue polypeptide: YcgL domain-containing protein KPK_1976 (93 aa).

A YcgL domain is found at 1–85; it reads MFCVIYRSTK…PSENLLKKHL (85 aa).

This chain is YcgL domain-containing protein KPK_1976, found in Klebsiella pneumoniae (strain 342).